The primary structure comprises 786 residues: DENN domain-containing protein 1C (786 aa).

The uDENN domain occupies phenylalanine 13–glutamate 158. One can recognise a cDENN domain in the interval serine 182 to arginine 318. The 79-residue stretch at valine 320–glycine 398 folds into the dDENN domain. Residues phenylalanine 401–phenylalanine 405 carry the FXDXF motif motif. The interval lysine 481–tryptophan 553 is disordered. Positions leucine 527–serine 541 are enriched in basic and acidic residues. Residues proline 542 to proline 552 are compositionally biased toward polar residues. Serine 565 is subject to Phosphoserine. Residues aspartate 570 to leucine 579 carry the Clathrin box motif. Disordered regions lie at residues tyrosine 653–glutamine 741 and serine 762–asparagine 786. Positions serine 657–serine 675 are enriched in low complexity. The span at leucine 706–proline 740 shows a compositional bias: polar residues. Basic and acidic residues predominate over residues proline 770–asparagine 786.

As to quaternary structure, exhibits low nucleotide-independent RAB35-binding activity. Interacts with clathrin heavy chain/CLTC and with AP2A2, but not with AP2B1.

Its subcellular location is the cytoplasm. It localises to the cytosol. The protein resides in the cytoplasmic vesicle. The protein localises to the clathrin-coated vesicle. Guanine nucleotide exchange factor (GEF) which may activate RAB8A, RAB13 and RAB35. Promotes the exchange of GDP to GTP, converting inactive GDP-bound Rab proteins into their active GTP-bound form. The chain is DENN domain-containing protein 1C (Dennd1c) from Mus musculus (Mouse).